The following is a 133-amino-acid chain: Basic phospholipase A2 beta-bungarotoxin A-AL2 chain (133 aa).

The first 5 residues, 1-5, serve as a signal peptide directing secretion; sequence FLLGA. Positions 6–13 are excised as a propeptide; the sequence is ANIPPHPL. 6 disulfides stabilise this stretch: cysteine 40–cysteine 132, cysteine 42–cysteine 58, cysteine 57–cysteine 113, cysteine 64–cysteine 106, cysteine 74–cysteine 99, and cysteine 92–cysteine 104. Tyrosine 41, glycine 43, and glycine 45 together coordinate Ca(2+). Histidine 61 is an active-site residue. Ca(2+) is bound at residue aspartate 62. Residue aspartate 107 is part of the active site.

This sequence belongs to the phospholipase A2 family. Group I subfamily. D49 sub-subfamily. Heterodimer; disulfide-linked. The A chains have phospholipase A2 activity and the B chains show homology with the basic protease inhibitors. The cofactor is Ca(2+). Expressed by the venom gland.

Its subcellular location is the secreted. It carries out the reaction a 1,2-diacyl-sn-glycero-3-phosphocholine + H2O = a 1-acyl-sn-glycero-3-phosphocholine + a fatty acid + H(+). In terms of biological role, snake venom phospholipase A2 (PLA2) that inhibits neuromuscular transmission by blocking acetylcholine release from the nerve termini. PLA2 catalyzes the calcium-dependent hydrolysis of the 2-acyl groups in 3-sn-phosphoglycerides. This Bungarus multicinctus (Many-banded krait) protein is Basic phospholipase A2 beta-bungarotoxin A-AL2 chain.